The sequence spans 430 residues: Evolutionarily conserved signaling intermediate in Toll pathway, mitochondrial (430 aa).

A mitochondrion-targeting transit peptide spans 1-48 (MSWVQATLLARGLCRAWGGICRAALPGTSISQVPRQLPRGLHCSAAPH). The interval 41–66 (LHCSAAPHSSEQSLVSSPPEPRQRPT) is disordered. The segment covering 47 to 56 (PHSSEQSLVS) has biased composition (polar residues). A Glycyl lysine isopeptide (Lys-Gly) (interchain with G-Cter in ubiquitin) cross-link involves residue lysine 372. The interval 400–430 (LHTSSAGLEEPPPPEDHEEDDSRQRQQQGQS) is disordered. Over residues 411 to 420 (PPPEDHEEDD) the composition is skewed to acidic residues.

Belongs to the ECSIT family. Interacts with MAP3K1, SMAD4 and TRAF6. Interacts with SMAD1 only after BMP4-treatment. Part of the mitochondrial complex I assembly/MCIA complex that comprises at least the core subunits TMEM126B, NDUFAF1, ECSIT and ACAD9 and complement subunits such as COA1 and TMEM186. Interacts with NDUFAF1. Interacts with ACAD9. Interacts with TRIM59. Interacts with TMEM70 and TMEM242. Interacts (when ubiquitinated) with NF-kappa-B subunits RELA and NFKB1. Interacts with RIGI, IFIT1 and MAVS; these interactions promote RLR-mediated type I IFN induction. Interacts with SQSTM1; this interaction inhibits TLR4 signaling via functional regulation of the TRAF6-ECSIT complex. Interacts with cereblon/CRBN; this interaction inhibits the ubiquitination of ECSIT. Ubiquitinated on Lys-372; leading to translocation in the nucleus together with RELA and NFKB1 and expression of NF-kappa-B-dependent genes.

The protein localises to the cytoplasm. The protein resides in the nucleus. It localises to the mitochondrion. In terms of biological role, adapter protein that plays a role in different signaling pathways including TLRs and IL-1 pathways or innate antiviral induction signaling. Plays a role in the activation of NF-kappa-B by forming a signal complex with TRAF6 and TAK1/MAP3K7 to activate TAK1/MAP3K7 leading to activation of IKKs. Once ubiquitinated, interacts with the dissociated RELA and NFKB1 proteins and translocates to the nucleus where it induces NF-kappa-B-dependent gene expression. Plays a role in innate antiviral immune response by bridging the pattern recognition receptors RIGI and MDA5/IFIT1 to the MAVS complex at the mitochondrion. Promotes proteolytic activation of MAP3K1. Involved in the BMP signaling pathway. Required for normal embryonic development. As part of the MCIA complex, involved in the assembly of the mitochondrial complex I. The chain is Evolutionarily conserved signaling intermediate in Toll pathway, mitochondrial from Macaca fascicularis (Crab-eating macaque).